We begin with the raw amino-acid sequence, 246 residues long: Probable transcriptional regulatory protein NT01CX_1819 (246 aa).

It belongs to the TACO1 family.

The protein localises to the cytoplasm. The protein is Probable transcriptional regulatory protein NT01CX_1819 of Clostridium novyi (strain NT).